The primary structure comprises 675 residues: Heat shock 70 kDa protein 12A (675 aa).

Over residues 1 to 13 the composition is skewed to basic and acidic residues; it reads MADKEAGGSDGPR. The tract at residues 1 to 45 is disordered; sequence MADKEAGGSDGPRETAPTSAYSSPARSLGDTGITPLSPSHIVNDT. N-acetylalanine is present on alanine 2. Polar residues-rich tracts occupy residues 16–25 and 34–45; these read APTSAYSSPA and TPLSPSHIVNDT.

This sequence belongs to the heat shock protein 70 family. As to quaternary structure, interacts with SORL1 (via cytosolic C-terminus); this interaction affects SORL1 internalization and subcellular localization. In terms of tissue distribution, widely expressed with highest levels in brain, kidney and muscle.

It localises to the cytoplasm. The protein resides in the nucleus. Its function is as follows. Adapter protein for SORL1, but not SORT1. Delays SORL1 internalization and affects SORL1 subcellular localization. The polypeptide is Heat shock 70 kDa protein 12A (HSPA12A) (Homo sapiens (Human)).